Reading from the N-terminus, the 538-residue chain is Atos homolog protein B (538 aa).

Residues 1 to 18 (MRHVQAEPSPSSEPEAGP) show a composition bias toward low complexity. Disordered stretches follow at residues 1–103 (MRHV…GLLG), 156–185 (HTRDWASPDPGGHGSLGESPGPAPPGQLHT), and 197–308 (GGKS…PMGR). Pro residues predominate over residues 227–238 (HTPPGPGPPGPC). Phosphoserine occurs at positions 254 and 255. Positions 274 to 286 (AANSSDAKATSFW) are enriched in polar residues. Residues 348–430 (LLGNFEESLL…VPKVGTVQVT (83 aa)) form a required for macropage invasion region. The segment at 436 to 444 (QTVVKMFLV) is transactivation domain 1 (TAD1).

Belongs to the ATOS family.

It is found in the nucleus. In terms of biological role, transcription regulator that may syncronize transcriptional and translational programs. This is Atos homolog protein B from Macaca fascicularis (Crab-eating macaque).